The primary structure comprises 190 residues: Recombination protein RecR (190 aa).

A C4-type zinc finger spans residues 58–73 (CEQCGALSENELCEIC). One can recognise a Toprim domain in the interval 81–167 (NILCIVESPK…TFSKIAQGIP (87 aa)).

Belongs to the RecR family.

May play a role in DNA repair. It seems to be involved in an RecBC-independent recombinational process of DNA repair. It may act with RecF and RecO. The chain is Recombination protein RecR from Campylobacter jejuni subsp. doylei (strain ATCC BAA-1458 / RM4099 / 269.97).